Here is a 760-residue protein sequence, read N- to C-terminus: ATP-dependent zinc metalloprotease FtsH (760 aa).

The Cytoplasmic portion of the chain corresponds to 1 to 5 (MNRKN). Residues 6 to 26 (VTRTITAIAVVVLLGWSFFYF) traverse the membrane as a helical segment. Residues 27-110 (SDDTRGYKPV…KVSTVVNQGS (84 aa)) are Extracellular-facing. Residues 111-131 (ILGELLVYVLPLLLLVGLFVM) form a helical membrane-spanning segment. Topologically, residues 132-760 (FSRMQGGARM…EVSRTKPAHG (629 aa)) are cytoplasmic. An ATP-binding site is contributed by 203-210 (GPPGTGKT). His-425 provides a ligand contact to Zn(2+). Residue Glu-426 is part of the active site. Residues His-429 and Asp-501 each contribute to the Zn(2+) site. The disordered stretch occupies residues 616–760 (DFGGRIPSDK…EVSRTKPAHG (145 aa)). Over residues 650 to 669 (AFKAAIAQATQAAEAARSDA) the composition is skewed to low complexity. Positions 740-750 (GSDESSAEQDD) are enriched in acidic residues.

The protein in the central section; belongs to the AAA ATPase family. In the C-terminal section; belongs to the peptidase M41 family. In terms of assembly, homohexamer. Requires Zn(2+) as cofactor.

It is found in the cell membrane. Its function is as follows. Acts as a processive, ATP-dependent zinc metallopeptidase for both cytoplasmic and membrane proteins. Plays a role in the quality control of integral membrane proteins. In Mycobacterium tuberculosis (strain CDC 1551 / Oshkosh), this protein is ATP-dependent zinc metalloprotease FtsH.